We begin with the raw amino-acid sequence, 299 residues long: Putative glycylpeptide N-tetradecanoyltransferase (299 aa).

This sequence belongs to the NMT family.

It catalyses the reaction N-terminal glycyl-[protein] + tetradecanoyl-CoA = N-tetradecanoylglycyl-[protein] + CoA + H(+). Adds a myristoyl group to the N-terminal glycine residue of certain proteins. The sequence is that of Putative glycylpeptide N-tetradecanoyltransferase from Amsacta moorei entomopoxvirus (AmEPV).